Reading from the N-terminus, the 103-residue chain is Large ribosomal subunit protein eL30 (103 aa).

The protein belongs to the eukaryotic ribosomal protein eL30 family.

This is Large ribosomal subunit protein eL30 from Methanothrix thermoacetophila (strain DSM 6194 / JCM 14653 / NBRC 101360 / PT) (Methanosaeta thermophila).